We begin with the raw amino-acid sequence, 183 residues long: MPIMPDTWIRQMAREKGMIEPFVEAQKREGVISYGLSSYGYDARVAEEFKIFTDVDSAIVDPKNFASNSFVTRTGDITIPPNSFALAHTVEYFRIPRDTLVVCLGKSTYARCGIIVNVTPLEPEWEGQVTIEISNTTPLPARIYANEGICQFLFFQGASPCEVSYADRAGKYMRQSGVTTPRL.

Position 106–111 (K106–R111) interacts with dCTP. The active-site Proton donor/acceptor is E132. Q151, Y165, and Q175 together coordinate dCTP.

This sequence belongs to the dCTP deaminase family. As to quaternary structure, homotrimer.

It carries out the reaction dCTP + H2O + H(+) = dUTP + NH4(+). The protein operates within pyrimidine metabolism; dUMP biosynthesis; dUMP from dCTP (dUTP route): step 1/2. Its function is as follows. Catalyzes the deamination of dCTP to dUTP. The chain is dCTP deaminase from Gluconobacter oxydans (strain 621H) (Gluconobacter suboxydans).